The primary structure comprises 249 residues: tRNA pseudouridine synthase A (249 aa).

Catalysis depends on Asp-52, which acts as the Nucleophile. Tyr-110 is a binding site for substrate.

This sequence belongs to the tRNA pseudouridine synthase TruA family. As to quaternary structure, homodimer.

The enzyme catalyses uridine(38/39/40) in tRNA = pseudouridine(38/39/40) in tRNA. Formation of pseudouridine at positions 38, 39 and 40 in the anticodon stem and loop of transfer RNAs. In Exiguobacterium sibiricum (strain DSM 17290 / CCUG 55495 / CIP 109462 / JCM 13490 / 255-15), this protein is tRNA pseudouridine synthase A.